Here is a 217-residue protein sequence, read N- to C-terminus: Methylthioribulose-1-phosphate dehydratase (217 aa).

Zn(2+) is bound by residues H106 and H108.

Belongs to the aldolase class II family. MtnB subfamily. Zn(2+) is required as a cofactor.

It catalyses the reaction 5-(methylsulfanyl)-D-ribulose 1-phosphate = 5-methylsulfanyl-2,3-dioxopentyl phosphate + H2O. The protein operates within amino-acid biosynthesis; L-methionine biosynthesis via salvage pathway; L-methionine from S-methyl-5-thio-alpha-D-ribose 1-phosphate: step 2/6. Its function is as follows. Catalyzes the dehydration of methylthioribulose-1-phosphate (MTRu-1-P) into 2,3-diketo-5-methylthiopentyl-1-phosphate (DK-MTP-1-P). The protein is Methylthioribulose-1-phosphate dehydratase of Xanthomonas euvesicatoria pv. vesicatoria (strain 85-10) (Xanthomonas campestris pv. vesicatoria).